Reading from the N-terminus, the 412-residue chain is Kelch repeat-containing protein At1g19470 (412 aa).

Residues 1–55 (MVNISEIPDDSNDGCDPNKKPEEQVLRRSRRIATRNENQNKKPKEEEEEDNRSVS) form a disordered region. Over residues 16–26 (DPNKKPEEQVL) the composition is skewed to basic and acidic residues. Kelch repeat units follow at residues 156–202 (EMYV…VVDG), 203–250 (KIYV…SAHA), 255–291 (KLYM…WDKT), and 292–345 (CCVV…EMAN).

This chain is Kelch repeat-containing protein At1g19470, found in Arabidopsis thaliana (Mouse-ear cress).